The primary structure comprises 145 residues: Protein phosphatase 1 regulatory subunit 14D (145 aa).

Residues 1-14 (MLSSSPASCTSPSP) show a composition bias toward low complexity. Positions 1–59 (MLSSSPASCTSPSPDGENPCKKVHWASGRRRTSSTDSESKSHPDSSKIPRSRRPSRLTV) are disordered. The segment at 21-25 (KKVHW) is interaction with protein phosphatase 1. Over residues 21–32 (KKVHWASGRRRT) the composition is skewed to basic residues. The span at 37-47 (SESKSHPDSSK) shows a compositional bias: basic and acidic residues. Threonine 58 is modified (phosphothreonine).

The protein belongs to the PP1 inhibitor family. Post-translationally, phosphorylated on several residues. In terms of tissue distribution, detected in colon, intestine, kidney and brain cortex.

The protein resides in the cytoplasm. In terms of biological role, inhibitor of PPP1CA. Has inhibitory activity only when phosphorylated, creating a molecular switch for regulating the phosphorylation status of PPP1CA substrates and smooth muscle contraction. In Homo sapiens (Human), this protein is Protein phosphatase 1 regulatory subunit 14D (PPP1R14D).